A 317-amino-acid chain; its full sequence is Beta-ketoacyl-[acyl-carrier-protein] synthase III (317 aa).

Catalysis depends on residues Cys-112 and His-244. Residues Gln-245 to Arg-249 are ACP-binding. Residue Asn-274 is part of the active site.

It belongs to the thiolase-like superfamily. FabH family. In terms of assembly, homodimer.

It localises to the cytoplasm. The catalysed reaction is malonyl-[ACP] + acetyl-CoA + H(+) = 3-oxobutanoyl-[ACP] + CO2 + CoA. The protein operates within lipid metabolism; fatty acid biosynthesis. Functionally, catalyzes the condensation reaction of fatty acid synthesis by the addition to an acyl acceptor of two carbons from malonyl-ACP. Catalyzes the first condensation reaction which initiates fatty acid synthesis and may therefore play a role in governing the total rate of fatty acid production. Possesses both acetoacetyl-ACP synthase and acetyl transacylase activities. Its substrate specificity determines the biosynthesis of branched-chain and/or straight-chain of fatty acids. The sequence is that of Beta-ketoacyl-[acyl-carrier-protein] synthase III from Salmonella paratyphi B (strain ATCC BAA-1250 / SPB7).